The primary structure comprises 97 residues: Probable gamma-secretase subunit PEN-2 (97 aa).

At 1-20 (MLIPEDDKLDDEKMINIAKK) the chain is on the cytoplasmic side. Residues 21–39 (LWFIGFFFLPWVWLINILY) constitute an intramembrane region (helical). Over 40-55 (FIPYRNSLNDKVKWYL) the chain is Cytoplasmic. The chain crosses the membrane as a helical span at residues 56-76 (KFSLIGFLGYSTIFMGWMGIY). Residues 77 to 97 (LVNRNKWGAFGDDISITIPFG) lie on the Lumenal side of the membrane.

This sequence belongs to the PEN-2 family. As to quaternary structure, the functional gamma-secretase complex is composed of at least four polypeptides: a presenilin homodimer, nicastrin, aph1 and psenen.

It is found in the endoplasmic reticulum membrane. The protein localises to the golgi apparatus. It localises to the golgi stack membrane. Its subcellular location is the cell membrane. The protein resides in the membrane. Its function is as follows. Essential subunit of the gamma-secretase complex, an endoprotease complex that catalyzes the intramembrane cleavage of integral membrane proteins such as Notch receptors. The gamma-secretase complex plays a role in Notch and Wnt signaling cascades and regulation of downstream processes via its role in processing key regulatory proteins. The protein is Probable gamma-secretase subunit PEN-2 (psenen) of Dictyostelium discoideum (Social amoeba).